A 272-amino-acid polypeptide reads, in one-letter code: METYAVFGNPIAHSKSPFIHQQFAQQLNIEHPYGRVLAPINDFINTLNAFFSAGGKGANVTVPFKEEAFARADELTERAALAGAVNTLKRLEDGRLLGDNTDGIGLLSDLERLSFIRPGLRILLIGAGGASRGVLLPLLSLDCAVTITNRTVSRAEELAKLFAHTGSIHALGMDELEGHEFDLIINATSSGISGDIPAIPSSLIHPGIYCYDMFYQKGKTPFLAWCEQRGSKRTADGLGMLVAQAAHAFLLWHGVLPDVEPVIKLLQQELSA.

Shikimate-binding positions include serine 14–serine 16 and threonine 61. Lysine 65 acts as the Proton acceptor in catalysis. Residue glutamate 77 coordinates NADP(+). Positions 86 and 102 each coordinate shikimate. NADP(+) is bound by residues glycine 126–alanine 130, asparagine 149–arginine 154, and methionine 213. Tyrosine 215 is a shikimate binding site. Glycine 237 is a binding site for NADP(+).

Belongs to the shikimate dehydrogenase family. In terms of assembly, homodimer.

The catalysed reaction is shikimate + NADP(+) = 3-dehydroshikimate + NADPH + H(+). The protein operates within metabolic intermediate biosynthesis; chorismate biosynthesis; chorismate from D-erythrose 4-phosphate and phosphoenolpyruvate: step 4/7. Involved in the biosynthesis of the chorismate, which leads to the biosynthesis of aromatic amino acids. Catalyzes the reversible NADPH linked reduction of 3-dehydroshikimate (DHSA) to yield shikimate (SA). This Escherichia coli O6:K15:H31 (strain 536 / UPEC) protein is Shikimate dehydrogenase (NADP(+)).